A 182-amino-acid chain; its full sequence is Triplatin (182 aa).

An N-terminal signal peptide occupies residues 1-18 (MKMIIAVTFLGIVTIAFA). Cystine bridges form between Cys21–Cys133, Cys55–Cys177, and Cys88–Cys105.

Belongs to the calycin superfamily. Triabin family. In terms of tissue distribution, expressed in salivary glands.

Its subcellular location is the secreted. In terms of biological role, inhibits platelet aggregation and vasoconstriction through binding to distinct eicosanoids involved in inflammation (acts as a scavenger), and has a role in inhibiting host innate immunity by impairing platelet-assisted formation of neutrophil extracellular traps (NETs). Inhibits platelet aggregation by collagen, and low doses of thromboxane A2 mimetic (TXA2 mimetic), and arachidonic acid (AA) without affecting aggregation induced by ADP, convulxin (GP6 agonist), and PMA. Binds to TXA2, TXB2, prostaglandine H2 mimetic (PGH2 mimetic), PGJ2, and PGF2alpha. Binding is not observed to leukotrienes, AA, and biogenic amines (PGE1, 5(S)-HETE, 12(S)-HETE, 20-HETE, norepinephrine, epinephrine, serotonin, LTC4 and ADP). Induces relaxation of aorta rat previously contracted with TXA2 mimetic. Moreover, it also impairs platelet-assisted formation of neutrophil extracellular traps (NETs). NETs are web-like structures of DNA and proteins that play an important role in killing of pathogens. In addition, NETs are implicated in thrombus formation. In vivo, this protein exhibits antithrombotic activity in two distinct mice models that are highly dependent on platelets. It is noteworthy that it inhibits thrombosis without promoting excessive bleeding. The chain is Triplatin from Triatoma infestans (Assassin bug).